Consider the following 1033-residue polypeptide: Isoleucine--tRNA ligase 2 (1033 aa).

Residues 47–57 (PTANGLPHVGH) carry the 'HIGH' region motif. The 'KMSKS' region signature appears at 590–594 (KMSKS). An ATP-binding site is contributed by lysine 593.

The protein belongs to the class-I aminoacyl-tRNA synthetase family. IleS type 2 subfamily. As to quaternary structure, monomer. It depends on Zn(2+) as a cofactor.

The protein localises to the cytoplasm. The enzyme catalyses tRNA(Ile) + L-isoleucine + ATP = L-isoleucyl-tRNA(Ile) + AMP + diphosphate. In terms of biological role, catalyzes the attachment of isoleucine to tRNA(Ile). As IleRS can inadvertently accommodate and process structurally similar amino acids such as valine, to avoid such errors it has two additional distinct tRNA(Ile)-dependent editing activities. One activity is designated as 'pretransfer' editing and involves the hydrolysis of activated Val-AMP. The other activity is designated 'posttransfer' editing and involves deacylation of mischarged Val-tRNA(Ile). The sequence is that of Isoleucine--tRNA ligase 2 from Bacillus cereus (strain ZK / E33L).